Here is a 154-residue protein sequence, read N- to C-terminus: Myoglobin (154 aa).

Residues 2 to 148 form the Globin domain; that stretch reads GLSDGEWTLV…FRNDMAAQYK (147 aa). A Phosphoserine modification is found at serine 4. Position 65 (histidine 65) interacts with nitrite. Histidine 65 serves as a coordination point for O2. Threonine 68 is subject to Phosphothreonine. A heme b-binding site is contributed by histidine 94.

The protein belongs to the globin family. As to quaternary structure, monomeric.

It is found in the cytoplasm. Its subcellular location is the sarcoplasm. It carries out the reaction Fe(III)-heme b-[protein] + nitric oxide + H2O = Fe(II)-heme b-[protein] + nitrite + 2 H(+). The enzyme catalyses H2O2 + AH2 = A + 2 H2O. Functionally, monomeric heme protein which primary function is to store oxygen and facilitate its diffusion within muscle tissues. Reversibly binds oxygen through a pentacoordinated heme iron and enables its timely and efficient release as needed during periods of heightened demand. Depending on the oxidative conditions of tissues and cells, and in addition to its ability to bind oxygen, it also has a nitrite reductase activity whereby it regulates the production of bioactive nitric oxide. Under stress conditions, like hypoxia and anoxia, it also protects cells against reactive oxygen species thanks to its pseudoperoxidase activity. This chain is Myoglobin, found in Capra hircus (Goat).